The chain runs to 372 residues: Cytochrome b (372 aa).

4 consecutive transmembrane segments (helical) span residues 25-45 (FGSM…FLAI), 69-90 (WIMQ…YIHI), 105-125 (WVSG…GYVL), and 170-190 (FFAL…IHVM). Positions 75 and 89 each coordinate heme b. Residues H174 and H188 each contribute to the heme b site. H193 serves as a coordination point for a ubiquinone. 4 helical membrane passes run 218 to 238 (YKDT…TSFF), 280 to 300 (LGGT…PFTH), 312 to 332 (MAQV…WAAT), and 339 to 358 (FTTI…IINP).

This sequence belongs to the cytochrome b family. As to quaternary structure, the cytochrome bc1 complex contains 3 respiratory subunits (MT-CYB, CYC1 and UQCRFS1), 2 core proteins (UQCRC1 and UQCRC2) and probably 6 low-molecular weight proteins. Heme b is required as a cofactor.

It localises to the mitochondrion inner membrane. Component of the ubiquinol-cytochrome c reductase complex (complex III or cytochrome b-c1 complex) that is part of the mitochondrial respiratory chain. The b-c1 complex mediates electron transfer from ubiquinol to cytochrome c. Contributes to the generation of a proton gradient across the mitochondrial membrane that is then used for ATP synthesis. This is Cytochrome b (MT-CYB) from Heterodon simus (Southern hognose snake).